The following is a 217-amino-acid chain: UPF0502 protein ETA_20480 (217 aa).

The disordered stretch occupies residues 169–188 (GEVDESSRADGHHPDDHRGD). Over residues 173–188 (ESSRADGHHPDDHRGD) the composition is skewed to basic and acidic residues.

Belongs to the UPF0502 family.

This Erwinia tasmaniensis (strain DSM 17950 / CFBP 7177 / CIP 109463 / NCPPB 4357 / Et1/99) protein is UPF0502 protein ETA_20480.